Reading from the N-terminus, the 165-residue chain is 6,7-dimethyl-8-ribityllumazine synthase (165 aa).

5-amino-6-(D-ribitylamino)uracil contacts are provided by residues F24, 62 to 64, and 86 to 88; these read AFE and AVI. 91–92 is a (2S)-2-hydroxy-3-oxobutyl phosphate binding site; that stretch reads DT. H94 functions as the Proton donor in the catalytic mechanism. Residue F119 coordinates 5-amino-6-(D-ribitylamino)uracil. R133 serves as a coordination point for (2S)-2-hydroxy-3-oxobutyl phosphate.

Belongs to the DMRL synthase family.

It catalyses the reaction (2S)-2-hydroxy-3-oxobutyl phosphate + 5-amino-6-(D-ribitylamino)uracil = 6,7-dimethyl-8-(1-D-ribityl)lumazine + phosphate + 2 H2O + H(+). It functions in the pathway cofactor biosynthesis; riboflavin biosynthesis; riboflavin from 2-hydroxy-3-oxobutyl phosphate and 5-amino-6-(D-ribitylamino)uracil: step 1/2. In terms of biological role, catalyzes the formation of 6,7-dimethyl-8-ribityllumazine by condensation of 5-amino-6-(D-ribitylamino)uracil with 3,4-dihydroxy-2-butanone 4-phosphate. This is the penultimate step in the biosynthesis of riboflavin. This Prochlorococcus marinus (strain MIT 9313) protein is 6,7-dimethyl-8-ribityllumazine synthase.